The sequence spans 376 residues: E3 ubiquitin-protein ligase RNF133 (376 aa).

One can recognise a PA domain in the interval 65 to 167 (SSTLKRVAGV…LKGTEIFHLI (103 aa)). A helical membrane pass occupies residues 190–210 (YLVSFVIVTTATLAYFIFYHI). Residues 256 to 297 (CVICFERYKPNDIVRILTCKHFFHKNCIDPWILPHGTCPICK) form an RING-type; atypical zinc finger. Residues 327–376 (ETLSPSEEETNNEVSPAGTSDKVIHVEENPTSQNNDIQPHSVVEDVHPSP) form a disordered region. Residues 355-364 (NPTSQNNDIQ) show a composition bias toward polar residues.

As to quaternary structure, interacts with E3 ligase UBE2J1. Auto-ubiquitinated. As to expression, expression is testis-specific.

The protein resides in the endoplasmic reticulum membrane. The catalysed reaction is S-ubiquitinyl-[E2 ubiquitin-conjugating enzyme]-L-cysteine + [acceptor protein]-L-lysine = [E2 ubiquitin-conjugating enzyme]-L-cysteine + N(6)-ubiquitinyl-[acceptor protein]-L-lysine.. Its pathway is protein modification; protein ubiquitination. Functionally, has E3 ubiquitin-protein ligase activity. Plays a role in male fecundity through the interaction with the E2 ubituitin-protein ligase UBE2J1. The sequence is that of E3 ubiquitin-protein ligase RNF133 from Homo sapiens (Human).